The chain runs to 392 residues: Tropomodulin (392 aa).

3 disordered regions span residues 1-30, 59-90, and 118-138; these read MSQA…QLPS, DLNN…GPYK, and QKRG…PENG. The span at 16-29 shows a compositional bias: polar residues; the sequence is SAPSANSQQGTQLP. Composition is skewed to basic and acidic residues over residues 76–90 and 122–138; these read RCRD…GPYK and KVYD…PENG.

It belongs to the tropomodulin family. Binds to the N-terminus of actin.

Its subcellular location is the cytoplasm. It localises to the cytoskeleton. Functionally, acts as the pointed end capping protein which maintains the length and dynamics of the actin filament. Blocks the elongation and depolymerization of the actin filaments at the pointed end. The protein is Tropomodulin (unc-94) of Caenorhabditis elegans.